Consider the following 297-residue polypeptide: Mycothiol acetyltransferase (297 aa).

2 N-acetyltransferase domains span residues 7–156 (VFSD…VTIR) and 153–297 (VTIR…PPPH). 1D-myo-inositol 2-(L-cysteinylamino)-2-deoxy-alpha-D-glucopyranoside is bound at residue Glu38. Residue 79–81 (VVV) coordinates acetyl-CoA. Glu180, Lys219, and Glu227 together coordinate 1D-myo-inositol 2-(L-cysteinylamino)-2-deoxy-alpha-D-glucopyranoside. Residues 231–233 (VGV) and 238–244 (QGLGLGR) each bind acetyl-CoA. Tyr265 provides a ligand contact to 1D-myo-inositol 2-(L-cysteinylamino)-2-deoxy-alpha-D-glucopyranoside. Residue 270–275 (NRPALR) participates in acetyl-CoA binding.

The protein belongs to the acetyltransferase family. MshD subfamily. In terms of assembly, monomer.

It carries out the reaction 1D-myo-inositol 2-(L-cysteinylamino)-2-deoxy-alpha-D-glucopyranoside + acetyl-CoA = mycothiol + CoA + H(+). Catalyzes the transfer of acetyl from acetyl-CoA to desacetylmycothiol (Cys-GlcN-Ins) to form mycothiol. The polypeptide is Mycothiol acetyltransferase (Thermomonospora curvata (strain ATCC 19995 / DSM 43183 / JCM 3096 / KCTC 9072 / NBRC 15933 / NCIMB 10081 / Henssen B9)).